A 207-amino-acid chain; its full sequence is Large ribosomal subunit protein uL4 (207 aa).

It belongs to the universal ribosomal protein uL4 family. In terms of assembly, part of the 50S ribosomal subunit.

Its function is as follows. One of the primary rRNA binding proteins, this protein initially binds near the 5'-end of the 23S rRNA. It is important during the early stages of 50S assembly. It makes multiple contacts with different domains of the 23S rRNA in the assembled 50S subunit and ribosome. Functionally, forms part of the polypeptide exit tunnel. This chain is Large ribosomal subunit protein uL4, found in Erythrobacter litoralis (strain HTCC2594).